Reading from the N-terminus, the 503-residue chain is AMP phosphorylase (503 aa).

AMP contacts are provided by residues glycine 168, 194–199 (SRAITS), and threonine 203. Aspartate 256 acts as the Proton donor in catalysis. Residues serine 264 and lysine 288 each contribute to the AMP site.

Belongs to the thymidine/pyrimidine-nucleoside phosphorylase family. Type 2 subfamily. Forms an exceptionally large macromolecular structure (&gt;40-mers) in solution.

It catalyses the reaction AMP + phosphate = alpha-D-ribose 1,5-bisphosphate + adenine. The enzyme catalyses CMP + phosphate = cytosine + alpha-D-ribose 1,5-bisphosphate. It carries out the reaction UMP + phosphate = alpha-D-ribose 1,5-bisphosphate + uracil. AMP phosphorolysis is allosterically regulated by the substrate AMP. Catalyzes the conversion of AMP and phosphate to adenine and ribose 1,5-bisphosphate (R15P). Exhibits phosphorylase activity toward CMP, dCMP and UMP in addition to AMP. Functions in an archaeal AMP degradation pathway, together with R15P isomerase and RubisCO. This chain is AMP phosphorylase, found in Thermococcus kodakarensis (strain ATCC BAA-918 / JCM 12380 / KOD1) (Pyrococcus kodakaraensis (strain KOD1)).